A 188-amino-acid polypeptide reads, in one-letter code: Elongation factor P (188 aa).

This sequence belongs to the elongation factor P family.

Its subcellular location is the cytoplasm. It functions in the pathway protein biosynthesis; polypeptide chain elongation. Its function is as follows. Involved in peptide bond synthesis. Stimulates efficient translation and peptide-bond synthesis on native or reconstituted 70S ribosomes in vitro. Probably functions indirectly by altering the affinity of the ribosome for aminoacyl-tRNA, thus increasing their reactivity as acceptors for peptidyl transferase. This is Elongation factor P (efp) from Ureaplasma parvum serovar 3 (strain ATCC 700970).